Reading from the N-terminus, the 156-residue chain is MSRRHRAEKREINPDPKFGDLIVTKFMNAIMLDGKKSVAESIVYGAFDAVQGKAKQEPLGVFHQALDNIAPHVEVRSRRVGGATYQVPVDVRPERRQALAIRWLITAARKRNETTMVDRLCGELLDASNNRGSAVKKREDTHKMADANRAFSHYRW.

It belongs to the universal ribosomal protein uS7 family. Part of the 30S ribosomal subunit. Contacts proteins S9 and S11.

One of the primary rRNA binding proteins, it binds directly to 16S rRNA where it nucleates assembly of the head domain of the 30S subunit. Is located at the subunit interface close to the decoding center, probably blocks exit of the E-site tRNA. The sequence is that of Small ribosomal subunit protein uS7 from Rhizobium rhizogenes (strain K84 / ATCC BAA-868) (Agrobacterium radiobacter).